A 207-amino-acid chain; its full sequence is Thiamine-phosphate synthase (207 aa).

Residues 36 to 40 (QMRIK) and Asp68 contribute to the 4-amino-2-methyl-5-(diphosphooxymethyl)pyrimidine site. Mg(2+) contacts are provided by Asp69 and Asp88. Residue Ser106 participates in 4-amino-2-methyl-5-(diphosphooxymethyl)pyrimidine binding. Residue 132-134 (TKT) participates in 2-[(2R,5Z)-2-carboxy-4-methylthiazol-5(2H)-ylidene]ethyl phosphate binding. Residue Lys135 participates in 4-amino-2-methyl-5-(diphosphooxymethyl)pyrimidine binding. 2-[(2R,5Z)-2-carboxy-4-methylthiazol-5(2H)-ylidene]ethyl phosphate contacts are provided by residues Gly162 and 182–183 (IS).

The protein belongs to the thiamine-phosphate synthase family. Requires Mg(2+) as cofactor.

The enzyme catalyses 2-[(2R,5Z)-2-carboxy-4-methylthiazol-5(2H)-ylidene]ethyl phosphate + 4-amino-2-methyl-5-(diphosphooxymethyl)pyrimidine + 2 H(+) = thiamine phosphate + CO2 + diphosphate. The catalysed reaction is 2-(2-carboxy-4-methylthiazol-5-yl)ethyl phosphate + 4-amino-2-methyl-5-(diphosphooxymethyl)pyrimidine + 2 H(+) = thiamine phosphate + CO2 + diphosphate. It carries out the reaction 4-methyl-5-(2-phosphooxyethyl)-thiazole + 4-amino-2-methyl-5-(diphosphooxymethyl)pyrimidine + H(+) = thiamine phosphate + diphosphate. Its pathway is cofactor biosynthesis; thiamine diphosphate biosynthesis; thiamine phosphate from 4-amino-2-methyl-5-diphosphomethylpyrimidine and 4-methyl-5-(2-phosphoethyl)-thiazole: step 1/1. Condenses 4-methyl-5-(beta-hydroxyethyl)thiazole monophosphate (THZ-P) and 2-methyl-4-amino-5-hydroxymethyl pyrimidine pyrophosphate (HMP-PP) to form thiamine monophosphate (TMP). This Pyrococcus furiosus (strain ATCC 43587 / DSM 3638 / JCM 8422 / Vc1) protein is Thiamine-phosphate synthase.